The primary structure comprises 725 residues: Probable alpha-galactosidase G (725 aa).

Asn407 carries N-linked (GlcNAc...) asparagine glycosylation. The active-site Nucleophile is Asp484. Asn490 carries an N-linked (GlcNAc...) asparagine glycan. Residue Asp546 is the Proton donor of the active site. Residue Asn672 is glycosylated (N-linked (GlcNAc...) asparagine).

This sequence belongs to the glycosyl hydrolase 36 family. Homotetramer. The cofactor is Mg(2+). NAD(+) is required as a cofactor.

It localises to the secreted. It catalyses the reaction Hydrolysis of terminal, non-reducing alpha-D-galactose residues in alpha-D-galactosides, including galactose oligosaccharides, galactomannans and galactolipids.. Hydrolyzes a variety of simple alpha-D-galactoside as well as more complex molecules such as oligosaccharides and polysaccharides. This chain is Probable alpha-galactosidase G (aglG), found in Aspergillus terreus (strain NIH 2624 / FGSC A1156).